The following is a 331-amino-acid chain: Laforin (331 aa).

Residues 1-124 enclose the CBM20 domain; the sequence is MLFRFGVVVP…NNLVDGVYCL (124 aa). At S25 the chain carries Phosphoserine; by AMPK. Residues W32, K87, 103-107, D197, D235, and R241 contribute to the substrate site; that span reads GPHHD. The 168-residue stretch at 156 to 323 folds into the Tyrosine-protein phosphatase domain; that stretch reads HYSRILPNIW…QQDFFQKFGK (168 aa). The active-site Phosphocysteine intermediate is the C266. A Glucan phosphatase signature motif CXAGXGR motif is present at residues 266–272; the sequence is CNAGVGR. Residues 267–272 and Y304 each bind substrate; that span reads NAGVGR.

The protein belongs to the protein-tyrosine phosphatase family. In terms of assembly, homodimer. Interacts with itself. Interacts with PPP1R3B, PPP1R3C, PPP1R3D, HIRIP5, and EPM2AIP1. Binds glycogen and Lafora bodies. Interacts with NHLRC1/malin (via the NHL repeats). Forms a complex with NHLRC1/malin and HSP70. Interacts with PPP1R3D; in the presence of NHLC1/malin the interaction leads to ubiquitination and autophagic degradation of PPP1R3D. Interacts (via the phosphatase domain) with MAPT/Tau; the interaction dephosphorylates MAPT. Interacts with PRDM8. Post-translationally, polyubiquitinated by NHLRC1/malin. In terms of processing, phosphorylation on Ser-25 by AMPK affects the phosphatase activity of the enzyme and its ability to homodimerize and interact with NHLRC1, PPP1R3C or PRKAA2. As to expression, widely expressed.

Its subcellular location is the cytoplasm. The protein resides in the endoplasmic reticulum membrane. The protein localises to the cell membrane. The enzyme catalyses O-phospho-L-tyrosyl-[protein] + H2O = L-tyrosyl-[protein] + phosphate. It catalyses the reaction O-phospho-L-seryl-[protein] + H2O = L-seryl-[protein] + phosphate. The catalysed reaction is O-phospho-L-threonyl-[protein] + H2O = L-threonyl-[protein] + phosphate. In terms of biological role, plays an important role in preventing glycogen hyperphosphorylation and the formation of insoluble aggregates, via its activity as glycogen phosphatase, and by promoting the ubiquitination of proteins involved in glycogen metabolism via its interaction with the E3 ubiquitin ligase NHLRC1/malin. Dephosphorylates phosphotyrosine and synthetic substrates, such as para-nitrophenylphosphate (pNPP), and has low activity with phosphoserine and phosphothreonine substrates (in vitro). Has also been shown to dephosphorylate MAPT. Shows strong phosphatase activity towards complex carbohydrates in vitro, avoiding glycogen hyperphosphorylation which is associated with reduced branching and formation of insoluble aggregates. Forms a complex with NHLRC1/malin and HSP70, which suppresses the cellular toxicity of misfolded proteins by promoting their degradation through the ubiquitin-proteasome system (UPS). Acts as a scaffold protein to facilitate PPP1R3C/PTG ubiquitination by NHLRC1/malin. Also promotes proteasome-independent protein degradation through the macroautophagy pathway. This chain is Laforin (Epm2a), found in Rattus norvegicus (Rat).